Reading from the N-terminus, the 537-residue chain is Probable sterol O-acyltransferase 1 (537 aa).

A run of 4 helical transmembrane segments spans residues 98–118 (FRGF…QLYA), 140–160 (FFVL…SYGL), 174–194 (LGYT…VYWV), and 199–219 (FPIV…MKQF). The N-linked (GlcNAc...) asparagine glycan is linked to asparagine 250. 2 helical membrane-spanning segments follow: residues 344-364 (FGLL…SAVA) and 384-404 (IMFP…DCIL). An FYXDWWN motif motif is present at residues 418–424 (FYGAWWN). Transmembrane regions (helical) follow at residues 462 to 482 (AVLL…LLAT) and 517 to 537 (VFFW…YIVF). Histidine 474 is a catalytic residue.

It belongs to the membrane-bound acyltransferase family. Sterol o-acyltransferase subfamily.

It is found in the endoplasmic reticulum membrane. In terms of biological role, sterol O-acyltransferase that catalyzes the formation of stery esters. This is Probable sterol O-acyltransferase 1 (are1) from Schizosaccharomyces pombe (strain 972 / ATCC 24843) (Fission yeast).